The primary structure comprises 200 residues: Potassium-transporting ATPase KdpC subunit (200 aa).

Residues 9-31 traverse the membrane as a helical segment; sequence LVMLVALTALTGLVYPLAMTGVA. Residues 68-97 are disordered; that stretch reads GRPSATTAPDPQDSSKTVPSPYNAANSMGA. A compositionally biased stretch (polar residues) spans 71–96; it reads SATTAPDPQDSSKTVPSPYNAANSMG.

The protein belongs to the KdpC family. The system is composed of three essential subunits: KdpA, KdpB and KdpC.

It localises to the cell inner membrane. Part of the high-affinity ATP-driven potassium transport (or Kdp) system, which catalyzes the hydrolysis of ATP coupled with the electrogenic transport of potassium into the cytoplasm. This subunit acts as a catalytic chaperone that increases the ATP-binding affinity of the ATP-hydrolyzing subunit KdpB by the formation of a transient KdpB/KdpC/ATP ternary complex. The sequence is that of Potassium-transporting ATPase KdpC subunit from Rhodopseudomonas palustris (strain BisA53).